Here is a 324-residue protein sequence, read N- to C-terminus: HTH-type transcriptional regulator CysB (324 aa).

An HTH lysR-type domain is found at 1 to 59 (MKLQQLRYIVEVVNHNLNVSSTAEGLYTSQPGISKQVRMLEDELGIQIFARSGKHLTQV). The segment at residues 19-38 (VSSTAEGLYTSQPGISKQVR) is a DNA-binding region (H-T-H motif).

The protein belongs to the LysR transcriptional regulatory family. As to quaternary structure, homotetramer.

It is found in the cytoplasm. Its function is as follows. This protein is a positive regulator of gene expression for the cysteine regulon. The inducer for CysB is N-acetylserine. Thiosulfate and sulfide act as anti-inducers. The chain is HTH-type transcriptional regulator CysB (cysB) from Klebsiella pneumoniae.